We begin with the raw amino-acid sequence, 569 residues long: S-(+)-linalool synthase, chloroplastic (569 aa).

The transit peptide at 1 to 39 directs the protein to the chloroplast; it reads MALIATKISSRSCFVSAYPNNSPTFLISKFPNTVDSLSP. Residues R294, D331, D335, R472, and D475 each coordinate (2E)-geranyl diphosphate. Mg(2+)-binding residues include D331 and D335. Positions 331–335 match the DDXXD motif motif; the sequence is DDIFD. Mg(2+) contacts are provided by D475, S479, and E483.

It belongs to the terpene synthase family. Tpsb subfamily. It depends on Mg(2+) as a cofactor. The cofactor is Mn(2+). As to expression, predominantly expressed in flowers but also in stems and siliques.

It is found in the plastid. It localises to the chloroplast. It carries out the reaction (2E)-geranyl diphosphate + H2O = (S)-linalool + diphosphate. It functions in the pathway secondary metabolite biosynthesis; terpenoid biosynthesis. In terms of biological role, involved in monoterpene (C10) biosynthesis. The major product is (S)-linalool. In Arabidopsis thaliana (Mouse-ear cress), this protein is S-(+)-linalool synthase, chloroplastic.